Here is a 67-residue protein sequence, read N- to C-terminus: Large ribosomal subunit protein bL32 (67 aa).

The span at 1–19 (MAVPKRKMSRSNTRARRSQ) shows a compositional bias: basic residues. Positions 1 to 21 (MAVPKRKMSRSNTRARRSQWK) are disordered.

It belongs to the bacterial ribosomal protein bL32 family.

This is Large ribosomal subunit protein bL32 from Arthrobacter sp. (strain FB24).